We begin with the raw amino-acid sequence, 689 residues long: Glycine--tRNA ligase beta subunit (689 aa).

Belongs to the class-II aminoacyl-tRNA synthetase family. As to quaternary structure, tetramer of two alpha and two beta subunits.

The protein resides in the cytoplasm. It carries out the reaction tRNA(Gly) + glycine + ATP = glycyl-tRNA(Gly) + AMP + diphosphate. In Shewanella sp. (strain W3-18-1), this protein is Glycine--tRNA ligase beta subunit.